The following is a 394-amino-acid chain: Elongation factor Tu (394 aa).

The 195-residue stretch at 10–204 (KPHVNVGTIG…YLDSYIPEPE (195 aa)) folds into the tr-type G domain. The interval 19 to 26 (GHVDHGKT) is G1. Position 19–26 (19–26 (GHVDHGKT)) interacts with GTP. A Mg(2+)-binding site is contributed by Thr26. The segment at 60–64 (GITIN) is G2. Positions 81 to 84 (DCPG) are G3. GTP-binding positions include 81 to 85 (DCPGH) and 136 to 139 (NKCD). The tract at residues 136–139 (NKCD) is G4. The interval 174–176 (SAL) is G5.

This sequence belongs to the TRAFAC class translation factor GTPase superfamily. Classic translation factor GTPase family. EF-Tu/EF-1A subfamily. Monomer.

The protein resides in the cytoplasm. It catalyses the reaction GTP + H2O = GDP + phosphate + H(+). Its function is as follows. GTP hydrolase that promotes the GTP-dependent binding of aminoacyl-tRNA to the A-site of ribosomes during protein biosynthesis. The protein is Elongation factor Tu of Enterobacter sp. (strain 638).